We begin with the raw amino-acid sequence, 315 residues long: N-acetyl-gamma-glutamyl-phosphate reductase (315 aa).

Residue Cys-117 is part of the active site.

This sequence belongs to the NAGSA dehydrogenase family. Type 2 subfamily.

The protein localises to the cytoplasm. It catalyses the reaction N-acetyl-L-glutamate 5-semialdehyde + phosphate + NADP(+) = N-acetyl-L-glutamyl 5-phosphate + NADPH + H(+). It participates in amino-acid biosynthesis; L-arginine biosynthesis; N(2)-acetyl-L-ornithine from L-glutamate: step 3/4. Catalyzes the NADPH-dependent reduction of N-acetyl-5-glutamyl phosphate to yield N-acetyl-L-glutamate 5-semialdehyde. This is N-acetyl-gamma-glutamyl-phosphate reductase from Burkholderia lata (strain ATCC 17760 / DSM 23089 / LMG 22485 / NCIMB 9086 / R18194 / 383).